The chain runs to 558 residues: Ceramide kinase-like protein (558 aa).

The disordered stretch occupies residues 1-36 (MPWRRRRNRVSALEGGREEEAPPEAAAVPPALLTSP). Short sequence motifs (nuclear localization signal) lie at residues 2–9 (PWRRRRNR) and 102–106 (KLKRR). A DAGKc domain is found at 164–339 (NRPKSLKILL…VDVCTFSTAG (176 aa)).

Post-translationally, phosphorylated on serine residues. As to expression, isoform 1 and isoform 2 are expressed in adult retina, liver and pancreas as well as in fetal brain, lung and kidney. Isoform 3 is expressed in adult retina as well as in fetal lung and liver. Isoform 4 is expressed in adult retina, lung and kidney as well as in fetal lung and liver. Moderately expressed in retina, kidney, lung, testis, trachea, and pancreas. Weakly expressed in brain, placenta and liver.

It localises to the cytoplasm. The protein resides in the nucleus. The protein localises to the nucleolus. Its subcellular location is the golgi apparatus. It is found in the trans-Golgi network. It localises to the endoplasmic reticulum. Its function is as follows. Has no detectable ceramide-kinase activity. Overexpression of CERKL protects cells from apoptosis in oxidative stress conditions. This Homo sapiens (Human) protein is Ceramide kinase-like protein (CERKL).